We begin with the raw amino-acid sequence, 125 residues long: MEPDGTYEPGIVGIRFCQECNNMLYPKEDKENRILLYACRNCDYQQEADNSCIYVNKITHEVDELTQIIADVSQDPTLPRTEDHPCQKCGHKEAVFFQSHSARAEDAMRLYYVCTAPHCGHRWTE.

The residue at position 1 (Met-1) is an N-acetylmethionine. The Zn(2+) site is built by Cys-17, Cys-20, Cys-39, Cys-42, Cys-86, Cys-89, Cys-114, and Cys-119. A C4-type zinc finger spans residues 17-42; sequence CQECNNMLYPKEDKENRILLYACRNC. A TFIIS-type zinc finger spans residues 82-124; the sequence is EDHPCQKCGHKEAVFFQSHSARAEDAMRLYYVCTAPHCGHRWT.

Belongs to the archaeal RpoM/eukaryotic RPA12/RPB9/RPC11 RNA polymerase family. As to quaternary structure, component of the RNA polymerase II (Pol II) core complex consisting of 12 subunits: a ten-subunit catalytic core composed of POLR2A/RPB1, POLR2B/RPB2, POLR2C/RPB3, POLR2I/RPB9, POLR2J/RPB11, POLR2E/RPABC1, POLR2F/RPABC2, POLR2H/RPABC3, POLR2K/RPABC4 and POLR2L/RPABC5 and a mobile stalk composed of two subunits POLR2D/RPB4 and POLR2G/RPB7, protruding from the core and functioning primarily in transcription initiation. Part of Pol II(G) complex, in which Pol II core associates with an additional subunit POLR2M; unlike conventional Pol II, Pol II(G) functions as a transcriptional repressor. Part of TBP-based Pol II pre-initiation complex (PIC), in which Pol II core assembles with general transcription factors and other specific initiation factors including GTF2E1, GTF2E2, GTF2F1, GTF2F2, TCEA1, ERCC2, ERCC3, GTF2H2, GTF2H3, GTF2H4, GTF2H5, GTF2A1, GTF2A2, GTF2B and TBP; this large multi-subunit PIC complex mediates DNA unwinding and targets Pol II core to the transcription start site where the first phosphodiester bond forms.

The protein localises to the nucleus. It is found in the nucleolus. DNA-dependent RNA polymerase catalyzes the transcription of DNA into RNA using the four ribonucleoside triphosphates as substrates. Component of RNA polymerase II which synthesizes mRNA precursors and many functional non-coding RNAs. Pol II is the central component of the basal RNA polymerase II transcription machinery. It is composed of mobile elements that move relative to each other. POLR2I/RPB9 is part of the upper jaw surrounding the central large cleft and thought to grab the incoming DNA template. In Bos taurus (Bovine), this protein is DNA-directed RNA polymerase II subunit RPB9 (POLR2I).